The chain runs to 393 residues: Cyclin CCL1 (393 aa).

Polar residues predominate over residues 1-19 (MTDIQLNGKSTLDTPSATM). Disordered stretches follow at residues 1–45 (MTDI…RISD) and 289–325 (SREG…SEEY). Composition is skewed to basic and acidic residues over residues 21 to 35 (AKEK…DENN) and 300 to 321 (NEKE…KSTE).

Belongs to the cyclin family. Cyclin C subfamily. As to quaternary structure, CCL1 and KIN28 form the TFIIK complex, a component of TFIIH holo complex. Component of a complex consisting of KIN28, CCL1 and TFB3.

Regulatory component of the TFIIK complex (KIN28-CCL1 dimer) which is the protein kinase component of transcription factor IIH (TFIIH) and phosphorylates the C-terminal domain of RNA polymerase II during transition from transcription to elongation after preinitiation complex (PIC) formation, thereby positively regulating transcription. TFIIH (or factor B) is essential for both basal and activated transcription, and is involved in nucleotide excision repair (NER) of damaged DNA. TFIIH has DNA-dependent ATPase activity and is essential for polymerase II transcription in vitro. This is Cyclin CCL1 (CCL1) from Saccharomyces cerevisiae (strain ATCC 204508 / S288c) (Baker's yeast).